An 850-amino-acid polypeptide reads, in one-letter code: Response regulator sskA (850 aa).

2 disordered regions span residues 1 to 225 (MPDR…GASS) and 419 to 542 (IPQR…GQSP). Low complexity predominate over residues 7–25 (SQLLKSKLLRRSSTTATTS). Residues 117 to 138 (GANSRQEGSQNGSIQQSPTFTR) show a composition bias toward polar residues. A compositionally biased stretch (basic and acidic residues) spans 144–163 (QLTEEKDKGKLQSREGDQRG). The span at 177–196 (SDPQYSLTTELANKPSTPQT) shows a compositional bias: polar residues. The segment covering 436-445 (HHSEPGEHGE) has biased composition (basic and acidic residues). Residues 477–490 (PSISILTTDSNMAS) are compositionally biased toward polar residues. The segment covering 492 to 511 (PQPPVAAPQVPTPPGPPPES) has biased composition (pro residues). One can recognise a Response regulatory domain in the interval 558-719 (NVLIVEDNII…WLEQKVTEWG (162 aa)). The residue at position 607 (aspartate 607) is a 4-aspartylphosphate. The tract at residues 736–850 (FADEPQSSSP…DEEQQALDAT (115 aa)) is disordered. Low complexity predominate over residues 762–782 (SSRTSTSPSSAAVNATARAFA). The segment covering 819-828 (TLDSPASPLT) has biased composition (polar residues). The span at 839–850 (PGDEEQQALDAT) shows a compositional bias: acidic residues.

Belongs to the SSK1 family.

Its subcellular location is the cytoplasm. Functionally, final receptor of the osmolarity two-component system regulatory system, which controls activity of the sakA mitogen-activated protein kinase (MAPK) pathway in response to changes in the osmolarity of the extracellular environment. Regulates the germination in the airways that drives enhanced disease initiation and inflammation in the lungs. This chain is Response regulator sskA, found in Aspergillus fumigatus (strain ATCC MYA-4609 / CBS 101355 / FGSC A1100 / Af293) (Neosartorya fumigata).